Consider the following 143-residue polypeptide: Ribonuclease P protein component 2 (143 aa).

It belongs to the eukaryotic/archaeal RNase P protein component 2 family. In terms of assembly, consists of a catalytic RNA component and at least 4-5 protein subunits.

The protein localises to the cytoplasm. It carries out the reaction Endonucleolytic cleavage of RNA, removing 5'-extranucleotides from tRNA precursor.. In terms of biological role, part of ribonuclease P, a protein complex that generates mature tRNA molecules by cleaving their 5'-ends. The polypeptide is Ribonuclease P protein component 2 (Saccharolobus islandicus (strain L.S.2.15 / Lassen #1) (Sulfolobus islandicus)).